The following is a 351-amino-acid chain: DNA polymerase IV (351 aa).

One can recognise a UmuC domain in the interval 4-185 (IIHVDMDCFF…LPLGKIPGVG (182 aa)). Mg(2+) is bound by residues D8 and D103. E104 is an active-site residue.

This sequence belongs to the DNA polymerase type-Y family. In terms of assembly, monomer. It depends on Mg(2+) as a cofactor.

It is found in the cytoplasm. The enzyme catalyses DNA(n) + a 2'-deoxyribonucleoside 5'-triphosphate = DNA(n+1) + diphosphate. Poorly processive, error-prone DNA polymerase involved in untargeted mutagenesis. Copies undamaged DNA at stalled replication forks, which arise in vivo from mismatched or misaligned primer ends. These misaligned primers can be extended by PolIV. Exhibits no 3'-5' exonuclease (proofreading) activity. May be involved in translesional synthesis, in conjunction with the beta clamp from PolIII. This chain is DNA polymerase IV, found in Cronobacter sakazakii (strain ATCC BAA-894) (Enterobacter sakazakii).